A 308-amino-acid polypeptide reads, in one-letter code: MRKIIVGSRSSKLAMTQTKWVIEQLKQAGAPYEFEIKNIITKGDRILDVTLSKVGGKGLFVKEIEQQMIDEDIDFAVHSMKDLPSELPTGLIIGATPSRVDARDALITTTGGGLDSLPEGAIVGTSSLRRGSQLLKLRPDLKIESIRGNIDTRLEKLKTGPFDGILLAAAGLQRMGWSEDIVSEYISTDDMIPAVGQGILAIECRANDQEVRDLLNLIHDQMTEKVAFAERSFLAAIEGSCHVPVGGFATINEDLSTTLVGFLGSVDGQQILLERETSLDPMQLGQTVATRLLDAGGREILASLPDDL.

Cys-241 carries the S-(dipyrrolylmethanemethyl)cysteine modification.

It belongs to the HMBS family. Monomer. Dipyrromethane serves as cofactor.

It catalyses the reaction 4 porphobilinogen + H2O = hydroxymethylbilane + 4 NH4(+). It participates in porphyrin-containing compound metabolism; protoporphyrin-IX biosynthesis; coproporphyrinogen-III from 5-aminolevulinate: step 2/4. Its function is as follows. Tetrapolymerization of the monopyrrole PBG into the hydroxymethylbilane pre-uroporphyrinogen in several discrete steps. In Exiguobacterium sibiricum (strain DSM 17290 / CCUG 55495 / CIP 109462 / JCM 13490 / 255-15), this protein is Porphobilinogen deaminase.